A 191-amino-acid polypeptide reads, in one-letter code: Elongation factor P (191 aa).

This sequence belongs to the elongation factor P family.

It is found in the cytoplasm. It participates in protein biosynthesis; polypeptide chain elongation. Involved in peptide bond synthesis. Stimulates efficient translation and peptide-bond synthesis on native or reconstituted 70S ribosomes in vitro. Probably functions indirectly by altering the affinity of the ribosome for aminoacyl-tRNA, thus increasing their reactivity as acceptors for peptidyl transferase. The protein is Elongation factor P of Bartonella henselae (strain ATCC 49882 / DSM 28221 / CCUG 30454 / Houston 1) (Rochalimaea henselae).